Reading from the N-terminus, the 1069-residue chain is Enteropeptidase (1069 aa).

The Cytoplasmic segment spans residues 1 to 18 (MKSSRDEAVGHHSISSFE). Residues 19–47 (VMLSALFIMLMVFSIGLIAVSWLAVKESE) form a helical; Signal-anchor for type II membrane protein membrane-spanning segment. The Extracellular segment spans residues 48 to 1069 (GDAALGKSHE…FIEWIHSFLH (1022 aa)). Residues 54–169 (KSHEVRGTFK…NSIDITASLS (116 aa)) form the SEA domain. 3 N-linked (GlcNAc...) asparagine glycosylation sites follow: asparagine 147, asparagine 197, and asparagine 212. Positions 227–268 (IECQPGSRPCAHAWNCVATDLFCDGEVNCPDGSDEDTGLCAT) constitute an LDL-receptor class A 1 domain. 4 disulfides stabilise this stretch: cysteine 229–cysteine 242, cysteine 236–cysteine 255, cysteine 249–cysteine 266, and cysteine 270–cysteine 298. Residues 270–379 (CDGRFLLTGD…IGFNATYSTF (110 aa)) enclose the CUB 1 domain. Asparagine 373, asparagine 380, asparagine 433, asparagine 515, asparagine 579, and asparagine 675 each carry an N-linked (GlcNAc...) asparagine glycan. An MAM domain is found at 387–549 (YEKIDCTFDD…ISLTNGICSQ (163 aa)). Residues cysteine 569 and cysteine 597 are joined by a disulfide bond. Residues 569–679 (CGGPFELWEP…KGFKANFTSG (111 aa)) form the CUB 2 domain. In terms of domain architecture, LDL-receptor class A 2 spans 686–724 (EPCQDDEFQCKDGNCIPLGNLCDSYPHCRDGSDEASCVR). 3 disulfides stabilise this stretch: cysteine 688/cysteine 700, cysteine 695/cysteine 713, and cysteine 707/cysteine 722. The 94-residue stretch at 723 to 816 (VRFLNGTRSN…LILLQCNHKS (94 aa)) folds into the SRCR domain. 4 N-linked (GlcNAc...) asparagine glycosylation sites follow: asparagine 727, asparagine 751, asparagine 770, and asparagine 791. Disulfide bonds link cysteine 802/cysteine 812, cysteine 817/cysteine 945, cysteine 859/cysteine 875, cysteine 959/cysteine 1027, cysteine 991/cysteine 1006, and cysteine 1017/cysteine 1045. The 240-residue stretch at 830 to 1069 (IVGGSDAQAG…FIEWIHSFLH (240 aa)) folds into the Peptidase S1 domain. The active-site Charge relay system is the histidine 874. N-linked (GlcNAc...) asparagine glycosylation is present at asparagine 897. The active-site Charge relay system is aspartate 925. 2 N-linked (GlcNAc...) asparagine glycosylation sites follow: asparagine 936 and asparagine 999. The active-site Charge relay system is the serine 1021.

The protein belongs to the peptidase S1 family. As to quaternary structure, heterodimer of a catalytic (light) chain and a multidomain (heavy) chain linked by a disulfide bond. Post-translationally, the chains are derived from a single precursor that is cleaved by a trypsin-like protease.

Its subcellular location is the membrane. It carries out the reaction Activation of trypsinogen by selective cleavage of 6-Lys-|-Ile-7 bond.. Functionally, responsible for initiating activation of pancreatic proteolytic proenzymes (trypsin, chymotrypsin and carboxypeptidase A). It catalyzes the conversion of trypsinogen to trypsin which in turn activates other proenzymes including chymotrypsinogen, procarboxypeptidases, and proelastases. The polypeptide is Enteropeptidase (Tmprss15) (Mus musculus (Mouse)).